Reading from the N-terminus, the 101-residue chain is UPF0213 protein VC_A0739 (101 aa).

The GIY-YIG domain occupies serine 9–alanine 85.

It belongs to the UPF0213 family.

The polypeptide is UPF0213 protein VC_A0739 (Vibrio cholerae serotype O1 (strain ATCC 39315 / El Tor Inaba N16961)).